The chain runs to 289 residues: Oxaloacetate decarboxylase 1 (289 aa).

Residue S50 coordinates substrate. D88 is a binding site for Mg(2+). Positions 159 and 235 each coordinate substrate.

Belongs to the isocitrate lyase/PEP mutase superfamily. Oxaloacetate decarboxylase family. In terms of assembly, homotetramer; dimer of dimers. The cofactor is Mg(2+).

The catalysed reaction is oxaloacetate + H(+) = pyruvate + CO2. Catalyzes the decarboxylation of oxaloacetate into pyruvate. Seems to play a role in maintaining cellular concentrations of bicarbonate and pyruvate. The chain is Oxaloacetate decarboxylase 1 from Pseudomonas fluorescens (strain Pf0-1).